Here is an 883-residue protein sequence, read N- to C-terminus: Chromatin structure-remodeling complex protein RSC30 (883 aa).

The segment at residues 14 to 45 (ACTQCRKRKIGCDRAKPICGNCVKYNKPDCFY) is a DNA-binding region (zn(2)-C6 fungal-type). 2 disordered regions span residues 121–157 (QNNN…DVPS) and 241–273 (NTTA…TSRT). Residues 130–149 (APRQNSSTVSSNVHGNTIVR) are compositionally biased toward polar residues. At S150 the chain carries Phosphoserine. A compositionally biased stretch (polar residues) spans 241–251 (NTTANKINKTG). Residues 252–270 (ENSKKGKVDGKRAGFDHQT) show a composition bias toward basic and acidic residues.

As to quaternary structure, forms a heteromer with RSC3. Interacts with NPL6. Component of the two forms of the RSC complex composed of at least either RSC1 or RSC2, and ARP7, ARP9, LDB7, NPL6, RSC3, RSC30, RSC4, RSC58, RSC6, RSC8, RSC9, SFH1, STH1, HTL1 and probably RTT102. The complexes interact with histone and histone variant components of centromeric chromatin. Component of a fungal-specific module (HTL1-LDB7-NPL6-RSC3-RSC30) within the RSC complex.

Its subcellular location is the nucleus. Component of the chromatin structure-remodeling complex (RSC), which is involved in transcription regulation and nucleosome positioning. RSC is responsible for the transfer of a histone octamer from a nucleosome core particle to naked DNA. The reaction requires ATP and involves an activated RSC-nucleosome intermediate. Remodeling reaction also involves DNA translocation, DNA twist and conformational change. As a reconfigurer of centromeric and flanking nucleosomes, RSC complex is required both for proper kinetochore function in chromosome segregation and, via a PKC1-dependent signaling pathway, for organization of the cellular cytoskeleton. This subunit is required for transcription of ribosomal protein genes and genes involved in the integrity of the cell wall. Together with HTL1, LDB7, NPL6, RSC3 components, defines a fungal-specific module within the RSC complex that plays a role in many cellular functions including the maintenance of cell wall integrity. This is Chromatin structure-remodeling complex protein RSC30 (RSC30) from Saccharomyces cerevisiae (strain ATCC 204508 / S288c) (Baker's yeast).